An 881-amino-acid chain; its full sequence is Probable alpha/beta-glucosidase agdC (881 aa).

The first 14 residues, 1 to 14 (MLRSLLLLAPLVGA), serve as a signal peptide directing secretion. Residues Asn-171, Asn-293, and Asn-373 are each glycosylated (N-linked (GlcNAc...) asparagine). Asp-422 functions as the Nucleophile in the catalytic mechanism. Glu-425 is an active-site residue. The tract at residues 440–485 (YSRDNDLPPAAPPVRPSNPRPLPGFPGDFQPSSSSKRSTKGSKVGL) is disordered. Over residues 448–463 (PAAPPVRPSNPRPLPG) the composition is skewed to pro residues. A glycan (N-linked (GlcNAc...) asparagine) is linked at Asn-506. Residue Asp-571 is the Proton donor of the active site. 3 N-linked (GlcNAc...) asparagine glycosylation sites follow: Asn-572, Asn-608, and Asn-742.

Belongs to the glycosyl hydrolase 31 family.

Its subcellular location is the secreted. The enzyme catalyses Hydrolysis of terminal, non-reducing (1-&gt;4)-linked alpha-D-glucose residues with release of alpha-D-glucose.. It catalyses the reaction Hydrolysis of terminal, non-reducing beta-D-glucosyl residues with release of beta-D-glucose.. Glucosidase involved in the degradation of cellulosic biomass. Has both alpha- and beta-glucosidase activity. This is Probable alpha/beta-glucosidase agdC (agdC) from Neosartorya fischeri (strain ATCC 1020 / DSM 3700 / CBS 544.65 / FGSC A1164 / JCM 1740 / NRRL 181 / WB 181) (Aspergillus fischerianus).